We begin with the raw amino-acid sequence, 242 residues long: 6-carboxyhexanoate--CoA ligase (242 aa).

The protein belongs to the BioW family. As to quaternary structure, homodimer. It depends on Mg(2+) as a cofactor.

It catalyses the reaction heptanedioate + ATP + CoA = 6-carboxyhexanoyl-CoA + AMP + diphosphate. Its pathway is metabolic intermediate metabolism; pimeloyl-CoA biosynthesis; pimeloyl-CoA from pimelate: step 1/1. Functionally, catalyzes the transformation of pimelate into pimeloyl-CoA with concomitant hydrolysis of ATP to AMP. This is 6-carboxyhexanoate--CoA ligase from Veillonella parvula (strain ATCC 10790 / DSM 2008 / CCUG 5123 / JCM 12972 / NCTC 11810 / Te3) (Veillonella alcalescens).